A 245-amino-acid polypeptide reads, in one-letter code: Small ribosomal subunit protein uS2 (245 aa).

Belongs to the universal ribosomal protein uS2 family.

This Pseudomonas putida (strain W619) protein is Small ribosomal subunit protein uS2.